Here is a 491-residue protein sequence, read N- to C-terminus: UDP-N-acetylmuramate--L-alanine ligase (491 aa).

126–132 lines the ATP pocket; that stretch reads GTHGKTT.

It belongs to the MurCDEF family.

The protein localises to the cytoplasm. It carries out the reaction UDP-N-acetyl-alpha-D-muramate + L-alanine + ATP = UDP-N-acetyl-alpha-D-muramoyl-L-alanine + ADP + phosphate + H(+). It functions in the pathway cell wall biogenesis; peptidoglycan biosynthesis. Cell wall formation. This chain is UDP-N-acetylmuramate--L-alanine ligase, found in Salmonella choleraesuis (strain SC-B67).